A 416-amino-acid polypeptide reads, in one-letter code: Histidine--tRNA ligase (416 aa).

Belongs to the class-II aminoacyl-tRNA synthetase family. In terms of assembly, homodimer.

It localises to the cytoplasm. It catalyses the reaction tRNA(His) + L-histidine + ATP = L-histidyl-tRNA(His) + AMP + diphosphate + H(+). This Dictyoglomus thermophilum (strain ATCC 35947 / DSM 3960 / H-6-12) protein is Histidine--tRNA ligase.